The sequence spans 292 residues: 11-beta-hydroxysteroid dehydrogenase 1 (292 aa).

The Cytoplasmic portion of the chain corresponds to 2-7; that stretch reads HFMKKY. A helical; Signal-anchor for type II membrane protein transmembrane segment spans residues 8-24; the sequence is LLPILVLFLAYYYYSTK. At 25-292 the chain is on the lumenal side; sequence EEFRPEMLQG…SFTFDKLISS (268 aa). Residues 41-67, 92-93, and 119-121 each bind NADP(+); these read GASK…TARS, TM, and NHI. Asn162 carries N-linked (GlcNAc...) asparagine glycosylation. Ser170 serves as a coordination point for substrate. Residue Tyr183 is the Proton acceptor of the active site. 183–187 contacts NADP(+); the sequence is YSASK. Asn207 carries an N-linked (GlcNAc...) asparagine glycan. Position 218-222 (218-222) interacts with NADP(+); sequence INTET.

It belongs to the short-chain dehydrogenases/reductases (SDR) family. As to quaternary structure, homodimer. As to expression, detected in adrenal gland, liver, kidney, testis, and at lower levels in brain and lung (at protein level).

The protein resides in the endoplasmic reticulum membrane. The enzyme catalyses an 11beta-hydroxysteroid + NADP(+) = an 11-oxosteroid + NADPH + H(+). It catalyses the reaction corticosterone + NADP(+) = 11-dehydrocorticosterone + NADPH + H(+). The catalysed reaction is a 7beta-hydroxysteroid + NADP(+) = a 7-oxosteroid + NADPH + H(+). It carries out the reaction 7-oxocholesterol + NADPH + H(+) = 7beta-hydroxycholesterol + NADP(+). The enzyme catalyses 7-oxocholesterol + NADPH + H(+) = 7alpha-hydroxycholesterol + NADP(+). It catalyses the reaction chenodeoxycholate + NADP(+) = 7-oxolithocholate + NADPH + H(+). The catalysed reaction is 7-oxolithocholate + NADPH + H(+) = ursodeoxycholate + NADP(+). It carries out the reaction glycochenodeoxycholate + NADP(+) = 7-oxoglycolithocholate + NADPH + H(+). The enzyme catalyses taurochenodeoxycholate + NADP(+) = 7-oxotaurolithocholate + NADPH + H(+). It catalyses the reaction tauroursodeoxycholate + NADP(+) = 7-oxotaurolithocholate + NADPH + H(+). The catalysed reaction is glycoursodeoxycholate + NADP(+) = 7-oxoglycolithocholate + NADPH + H(+). It carries out the reaction 7-oxopregnenolone + NADPH + H(+) = 7beta-hydroxypregnenolone + NADP(+). The enzyme catalyses 3beta,7alpha-dihydroxyandrost-5-en-17-one + NADP(+) = 3beta-hydroxy-5-androstene-7,17-dione + NADPH + H(+). It catalyses the reaction 3beta-hydroxy-5-androstene-7,17-dione + NADPH + H(+) = 3beta,7beta-dihydroxyandrost-5-en-17-one + NADP(+). The catalysed reaction is 3beta-hydroxy-5alpha-androstane-7,17-dione + NADPH + H(+) = 3beta,7beta-dihydroxy-5alpha-androstan-17-one + NADP(+). The protein operates within steroid metabolism. In terms of biological role, controls the reversible conversion of biologically active glucocorticoids such as 11-dehydrocorticosterone to corticosterone in the presence of NADP(H). Participates in the corticosteroid receptor-mediated anti-inflammatory response, as well as metabolic and homeostatic processes. Bidirectional in vitro, predominantly functions as a reductase in vivo, thereby increasing the concentration of active glucocorticoids. It has broad substrate specificity, besides glucocorticoids, it accepts other steroid and sterol substrates. Interconverts 7-oxo- and 7-hydroxy-neurosteroids such as 7-oxopregnenolone and 7beta-hydroxypregnenolone, 7-oxodehydroepiandrosterone (3beta-hydroxy-5-androstene-7,17-dione) and 7beta-hydroxydehydroepiandrosterone (3beta,7beta-dihydroxyandrost-5-en-17-one), among others. Catalyzes reversibly the conversion of the major dietary oxysterol, 7-ketocholesterol (7-oxocholesterol), into the more polar 7-beta-hydroxycholesterol and 7-alpha-hhydroxycholesterol metabolites. 7-oxocholesterol is one of the most important oxysterols, it participates in several events such as induction of apoptosis, accumulation in atherosclerotic lesions, lipid peroxidation, and induction of foam cell formation. Mediates the 7-oxo reduction of 7-oxolithocholate mainly to chenodeoxycholate, and to a lesser extent to ursodeoxycholate, both in its free form and when conjugated to glycine or taurine, providing a link between glucocorticoid activation and bile acid metabolism. Catalyzes the synthesis of 7-beta-25-dihydroxycholesterol from 7-oxo-25-hydroxycholesterol in vitro, which acts as a ligand for the G-protein-coupled receptor (GPCR) Epstein-Barr virus-induced gene 2 (EBI2) and may thereby regulate immune cell migration. This chain is 11-beta-hydroxysteroid dehydrogenase 1 (HSD11B1), found in Mesocricetus auratus (Golden hamster).